The following is a 148-amino-acid chain: MAFSLENLRPAPGSRPKSKRVGRGSSSGKGKTSSRGHKGQGRGTGKVRMFFEGGQTPLFRRIPIKGFKNRNAKEYVIINLSTLEEVFEEGNVITPEILLEKKIIKNLKDGVKILGKGELTKALVVKAHAFSRTAKEKIEAVGGKAEVI.

A disordered region spans residues 1–47 (MAFSLENLRPAPGSRPKSKRVGRGSSSGKGKTSSRGHKGQGRGTGKV).

Belongs to the universal ribosomal protein uL15 family. As to quaternary structure, part of the 50S ribosomal subunit.

Functionally, binds to the 23S rRNA. The polypeptide is Large ribosomal subunit protein uL15 (Kosmotoga olearia (strain ATCC BAA-1733 / DSM 21960 / TBF 19.5.1)).